Consider the following 494-residue polypeptide: GTPase Der (494 aa).

2 EngA-type G domains span residues 3-166 (PVVA…AEQM) and 206-379 (IKLA…RSAT). Residues 9–16 (GRPNVGKS), 56–60 (DTGGI), 118–121 (NKVD), 212–219 (GRPNVGKS), 259–263 (DTAGV), and 324–327 (NKWD) each bind GTP. The KH-like domain maps to 380 to 464 (TRVGTSVLTR…PIRIQFQNSE (85 aa)).

The protein belongs to the TRAFAC class TrmE-Era-EngA-EngB-Septin-like GTPase superfamily. EngA (Der) GTPase family. Associates with the 50S ribosomal subunit.

Functionally, GTPase that plays an essential role in the late steps of ribosome biogenesis. This chain is GTPase Der, found in Vibrio cholerae serotype O1 (strain ATCC 39541 / Classical Ogawa 395 / O395).